Here is a 390-residue protein sequence, read N- to C-terminus: GTPase Obg (390 aa).

The Obg domain occupies 1–159 (MKFVDEATIK…RELRLELLLL (159 aa)). The region spanning 160 to 333 (ADVGMLGLPN…LCDELADFMD (174 aa)) is the OBG-type G domain. GTP is bound by residues 166–173 (GLPNAGKS), 191–195 (FTTLI), 213–216 (DIPG), 283–286 (NKTD), and 314–316 (AAV). Residues Ser-173 and Thr-193 each coordinate Mg(2+).

This sequence belongs to the TRAFAC class OBG-HflX-like GTPase superfamily. OBG GTPase family. Monomer. Requires Mg(2+) as cofactor.

Its subcellular location is the cytoplasm. Its function is as follows. An essential GTPase which binds GTP, GDP and possibly (p)ppGpp with moderate affinity, with high nucleotide exchange rates and a fairly low GTP hydrolysis rate. Plays a role in control of the cell cycle, stress response, ribosome biogenesis and in those bacteria that undergo differentiation, in morphogenesis control. The polypeptide is GTPase Obg (Aliivibrio fischeri (strain ATCC 700601 / ES114) (Vibrio fischeri)).